A 214-amino-acid polypeptide reads, in one-letter code: uncharacterized protein (214 aa).

The next 5 helical transmembrane spans lie at 33-53 (VILF…ILVV), 104-124 (ILGI…SYVL), 132-152 (FIYL…LSAS), 153-173 (GGVL…FGTK), and 186-206 (LLIL…TITF).

The protein resides in the cell membrane. This is an uncharacterized protein from Methanocaldococcus jannaschii (strain ATCC 43067 / DSM 2661 / JAL-1 / JCM 10045 / NBRC 100440) (Methanococcus jannaschii).